A 323-amino-acid polypeptide reads, in one-letter code: tRNA U34 carboxymethyltransferase (323 aa).

Residues lysine 91, tryptophan 105, lysine 110, glycine 130, 152–154 (DPS), 181–182 (IE), methionine 196, tyrosine 200, and arginine 315 contribute to the carboxy-S-adenosyl-L-methionine site.

It belongs to the class I-like SAM-binding methyltransferase superfamily. CmoB family. As to quaternary structure, homotetramer.

It catalyses the reaction carboxy-S-adenosyl-L-methionine + 5-hydroxyuridine(34) in tRNA = 5-carboxymethoxyuridine(34) in tRNA + S-adenosyl-L-homocysteine + H(+). Functionally, catalyzes carboxymethyl transfer from carboxy-S-adenosyl-L-methionine (Cx-SAM) to 5-hydroxyuridine (ho5U) to form 5-carboxymethoxyuridine (cmo5U) at position 34 in tRNAs. This is tRNA U34 carboxymethyltransferase from Vibrio campbellii (strain ATCC BAA-1116).